The sequence spans 299 residues: uncharacterized protein (299 aa).

The next 6 helical transmembrane spans lie at 32 to 52 (FILL…YLHL), 56 to 76 (SMII…SILY), 199 to 219 (LAIG…LLGA), 220 to 240 (YLIA…VKPE), 246 to 266 (FEIV…PIFG), and 273 to 293 (FLIS…ILKF).

The protein localises to the cell membrane. This is an uncharacterized protein from Methanocaldococcus jannaschii (strain ATCC 43067 / DSM 2661 / JAL-1 / JCM 10045 / NBRC 100440) (Methanococcus jannaschii).